The primary structure comprises 383 residues: Probable endoplasmic reticulum-Golgi intermediate compartment protein 3 (383 aa).

The Cytoplasmic portion of the chain corresponds to 1–26 (MLISQLKKFDAYPKTVDDFRVKTYTG). A helical membrane pass occupies residues 27–47 (AIVSIIGGVFILWLFFSQVTL). At 48–347 (YFSTDIHHEL…GKSFASFLTN (300 aa)) the chain is on the lumenal side. The helical transmembrane segment at 348 to 368 (VCAIIGGVFTVFGIFDSFIYY) threads the bilayer. The Cytoplasmic portion of the chain corresponds to 369 to 383 (STKNLQKKIDLGKTF).

Belongs to the ERGIC family.

Its subcellular location is the endoplasmic reticulum-Golgi intermediate compartment membrane. The protein resides in the golgi apparatus. It is found in the cis-Golgi network membrane. The protein localises to the endoplasmic reticulum membrane. Possible role in transport between endoplasmic reticulum and Golgi. This is Probable endoplasmic reticulum-Golgi intermediate compartment protein 3 (ergic3) from Dictyostelium discoideum (Social amoeba).